Consider the following 509-residue polypeptide: Cruciferin CRU1 (509 aa).

A signal peptide spans 1–23; it reads MVKVPHLLVATFGVLLVLNGCLA. A disulfide bridge connects residues Cys-37 and Cys-70. A Cupin type-1 1 domain is found at 42 to 271; sequence LDVLQPTETI…ALKIDVRLAQ (230 aa). Phosphoserine is present on residues Ser-53 and Ser-97. Cys-113 and Cys-326 are oxidised to a cystine. Thr-116 carries the post-translational modification Phosphothreonine. 3 disordered regions span residues 119–175, 230–249, and 301–321; these read DSQP…GFRD, RLAGNNPQGGSQQQQQQQQN, and YESEQWRHPRGPPQSPQDNGL. Low complexity predominate over residues 124-172; the sequence is QGQQQGQPWQGQQGQQGQQGQQGQQGQQGQQGQQGQQGQQGQQGQQQQG. The Cupin type-1 2 domain maps to 332–481; it reads ENIDDPARAD…AFQISLEEAR (150 aa). The residue at position 352 (Ser-352) is a Phosphoserine. Thr-445 and Thr-487 each carry phosphothreonine.

Belongs to the 11S seed storage protein (globulins) family. Hexamer; each subunit is composed of an acidic and a basic chain derived from a single precursor and linked by a disulfide bond.

This is a seed storage protein. This is Cruciferin CRU1 (CRU1) from Brassica napus (Rape).